The primary structure comprises 300 residues: ADP-polyphosphate phosphotransferase 1 (300 aa).

This sequence belongs to the polyphosphate kinase 2 (PPK2) family. Class I subfamily. In terms of assembly, homotetramer. Requires Mg(2+) as cofactor.

It carries out the reaction [phosphate](n) + ATP = [phosphate](n+1) + ADP. It catalyses the reaction [phosphate](n) + GTP = [phosphate](n+1) + GDP. Functionally, uses inorganic polyphosphate (polyP) as a donor to convert ADP to ATP. Can also convert GDP to GTP, with lower efficiency. Cannot dephosphorylate ATP in the presence of polyP. The chain is ADP-polyphosphate phosphotransferase 1 from Rhizobium meliloti (strain 1021) (Ensifer meliloti).